The sequence spans 243 residues: tRNA (guanine-N(1)-)-methyltransferase (243 aa).

S-adenosyl-L-methionine is bound by residues Gly-111 and 130–135 (IGDYVL).

It belongs to the RNA methyltransferase TrmD family. In terms of assembly, homodimer.

Its subcellular location is the cytoplasm. It catalyses the reaction guanosine(37) in tRNA + S-adenosyl-L-methionine = N(1)-methylguanosine(37) in tRNA + S-adenosyl-L-homocysteine + H(+). Functionally, specifically methylates guanosine-37 in various tRNAs. This Acholeplasma laidlawii (strain PG-8A) protein is tRNA (guanine-N(1)-)-methyltransferase.